The following is a 135-amino-acid chain: Cytochrome c-type biogenesis protein CcmE (135 aa).

Over 1–8 the chain is Cytoplasmic; the sequence is MLLLRWKR. Residues 9-29 form a helical; Signal-anchor for type II membrane protein membrane-spanning segment; that stretch reads FWFLSLGILLFSGVVSLMLFN. The Periplasmic segment spans residues 30 to 135; that stretch reads LSESISFFYL…EDFIKSVRGE (106 aa). Heme-binding residues include H118 and Y122.

It belongs to the CcmE/CycJ family.

The protein resides in the cell inner membrane. Its function is as follows. Heme chaperone required for the biogenesis of c-type cytochromes. Transiently binds heme delivered by CcmC and transfers the heme to apo-cytochromes in a process facilitated by CcmF and CcmH. The polypeptide is Cytochrome c-type biogenesis protein CcmE (Neorickettsia sennetsu (strain ATCC VR-367 / Miyayama) (Ehrlichia sennetsu)).